A 682-amino-acid chain; its full sequence is E3 ubiquitin-protein ligase RNF103 (682 aa).

4 consecutive transmembrane segments (helical) span residues 6–26, 326–346, 366–386, and 411–431; these read FFLL…EAIV, LFVL…FITQ, LLII…LDSF, and MFYS…GLLI. Acidic residues predominate over residues 525–542; that stretch reads EEMSESSQDTENDSDSDN. A disordered region spans residues 525 to 549; that stretch reads EEMSESSQDTENDSDSDNTDTFSSS. The RING-type zinc finger occupies 618 to 660; sequence CVVCLENFENGCLLMGLPCGHVFHQNCIVMWLAGGRHCCPVCR.

Interacts with DERL1 and VCP. As to expression, expressed in different tissues including hippocampus, cerebral cortex, heart, kidney, spleen and lung. Expression is increased in hippocampus and frontal cortex after chronic treatment with antidepressants.

The protein localises to the endoplasmic reticulum membrane. It catalyses the reaction S-ubiquitinyl-[E2 ubiquitin-conjugating enzyme]-L-cysteine + [acceptor protein]-L-lysine = [E2 ubiquitin-conjugating enzyme]-L-cysteine + N(6)-ubiquitinyl-[acceptor protein]-L-lysine.. It functions in the pathway protein modification; protein ubiquitination. Functionally, acts as an E2-dependent E3 ubiquitin-protein ligase, probably involved in the ER-associated protein degradation pathway. In Rattus norvegicus (Rat), this protein is E3 ubiquitin-protein ligase RNF103 (Rnf103).